The following is a 338-amino-acid chain: Lipoate-protein ligase A (338 aa).

Residues 29-216 (PATQRVLFLW…AFFAHYGERV (188 aa)) enclose the BPL/LPL catalytic domain. ATP-binding positions include arginine 71, 76–79 (GAVF), and lysine 134. Lysine 134 contributes to the (R)-lipoate binding site.

It belongs to the LplA family. As to quaternary structure, monomer.

Its subcellular location is the cytoplasm. The catalysed reaction is L-lysyl-[lipoyl-carrier protein] + (R)-lipoate + ATP = N(6)-[(R)-lipoyl]-L-lysyl-[lipoyl-carrier protein] + AMP + diphosphate + H(+). It participates in protein modification; protein lipoylation via exogenous pathway; protein N(6)-(lipoyl)lysine from lipoate: step 1/2. Its pathway is protein modification; protein lipoylation via exogenous pathway; protein N(6)-(lipoyl)lysine from lipoate: step 2/2. Functionally, catalyzes both the ATP-dependent activation of exogenously supplied lipoate to lipoyl-AMP and the transfer of the activated lipoyl onto the lipoyl domains of lipoate-dependent enzymes. This is Lipoate-protein ligase A from Salmonella schwarzengrund (strain CVM19633).